We begin with the raw amino-acid sequence, 387 residues long: MKDVVIVDCIRTPMGRSKGGAFRNVRAEDLSAHLMKSILLRNPNLDPNEIEDIYWGCVQQTLEQGFNIARNAALLAGIPKQVGAVTVNRLCGSSMQALHDASRAIQVGDGDIFIIGGVEHMGHVPMSHGVDFHPGMAKSVAKASGMMGLTAEMLGKLHGISRQQQDEFAARSHRRAHAATVEGRFAKEIVGLEGHDASGARFFYDYDEVIRPETTVETLSQLRPVFDPVNGTVTAGTSSALSDGAAAMLVMSADRAKALGLTPRAKIRAMAVAGCDAAIMGYGPVPATQKALKRAGLTIGDIDLFELNEAFAAQSLPCVKDLGLQDVVDEKVNLNGGAIALGHPLGCSGARISTTLLNLMEEKDATLGVATMCIGLGQGIATVFERV.

Catalysis depends on Cys-91, which acts as the Acyl-thioester intermediate. Active-site proton acceptor residues include His-343 and Cys-373.

This sequence belongs to the thiolase-like superfamily. Thiolase family. As to quaternary structure, heterotetramer of two alpha chains (FadB) and two beta chains (FadA).

It is found in the cytoplasm. The catalysed reaction is an acyl-CoA + acetyl-CoA = a 3-oxoacyl-CoA + CoA. The protein operates within lipid metabolism; fatty acid beta-oxidation. Functionally, catalyzes the final step of fatty acid oxidation in which acetyl-CoA is released and the CoA ester of a fatty acid two carbons shorter is formed. The polypeptide is 3-ketoacyl-CoA thiolase (Aeromonas hydrophila subsp. hydrophila (strain ATCC 7966 / DSM 30187 / BCRC 13018 / CCUG 14551 / JCM 1027 / KCTC 2358 / NCIMB 9240 / NCTC 8049)).